A 474-amino-acid polypeptide reads, in one-letter code: Zinc finger protein 230 (474 aa).

The KRAB domain occupies 8–76 (VTFKDVAVFF…ETATQREGNS (69 aa)). The KRNB stretch occupies residues 80–167 (TIAEAGPHED…PQQFHSGEKS (88 aa)). 9 consecutive C2H2-type zinc fingers follow at residues 168 to 190 (HTCN…QRVH), 196 to 218 (SKCD…ERVH), 224 to 246 (FKCE…CKLH), 252 to 274 (YICE…QIIH), 280 to 302 (FKCE…CMVH), 308 to 330 (YKSE…QIIH), 336 to 358 (YNCK…QRIH), 364 to 386 (YRCE…QRVH), and 392 to 414 (YNCK…KKLH). The C2H2-type 10; atypical zinc-finger motif lies at 420–442 (FKCEDCGKRLVHRSFCKDQQGDH).

It belongs to the krueppel C2H2-type zinc-finger protein family.

It localises to the nucleus. Functionally, may be involved in transcriptional regulation. The sequence is that of Zinc finger protein 230 (ZNF230) from Homo sapiens (Human).